Reading from the N-terminus, the 121-residue chain is Surface glycoprotein CD59 homolog (121 aa).

The first 19 residues, 1–19 (MYILFTLVLTFVFCKPIHS), serve as a signal peptide directing secretion. A UPAR/Ly6 domain is found at 20 to 104 (LQCYNCSHST…ENIKRTISDK (85 aa)). Cystine bridges form between Cys-22/Cys-45, Cys-25/Cys-32, Cys-38/Cys-58, Cys-64/Cys-82, and Cys-83/Cys-88. Asn-24 is a glycosylation site (N-linked (GlcNAc...) asparagine; by host). A lipid anchor (GPI-anchor amidated asparagine; by host) is attached at Asn-96. The propeptide at 97–121 (IKRTISDKALLLLALFLVTAWNFPL) is removed in mature form.

It is found in the host cell membrane. The chain is Surface glycoprotein CD59 homolog (15) from Saimiriine herpesvirus 2 (strain 11) (SaHV-2).